Consider the following 375-residue polypeptide: MSRTLELAKDLIARKSVTPDDAGCQELLISRLEPLGFSIERLRFGDVDNFYARRGNTGPLLVFAGHTDVVPTGPVAQWHTPPFTPTVKDGMLYGRGAADMKTSLAAFITAIEAFVADHPDHPGSIGLIITSDEEGVAINGTVKVVETLKARNELIDYCIVGEPTSSKVVGDMIKNGRRGSLSGKLTVKGIQGHIAYPHLVKNPIHMAAPAIKELSETIWDEGNEYFPPTSWQISNIHGGTGATNVVPGEVEILFNFRFSTASTAENLKQRVHAILDRHQLEYDLAWELSGKPFLTPRGSLVTAISSAIDQAFGVTPALSTSGGTSDGRFIADIAGQIVEFGPLNATIHKLNECVAVADIEPLRRTYQLTLEALLK.

His66 lines the Zn(2+) pocket. The active site involves Asp68. Asp99 lines the Zn(2+) pocket. The active-site Proton acceptor is Glu133. 3 residues coordinate Zn(2+): Glu134, Glu162, and His348.

The protein belongs to the peptidase M20A family. DapE subfamily. In terms of assembly, homodimer. Requires Zn(2+) as cofactor. The cofactor is Co(2+).

It catalyses the reaction N-succinyl-(2S,6S)-2,6-diaminopimelate + H2O = (2S,6S)-2,6-diaminopimelate + succinate. The protein operates within amino-acid biosynthesis; L-lysine biosynthesis via DAP pathway; LL-2,6-diaminopimelate from (S)-tetrahydrodipicolinate (succinylase route): step 3/3. Its function is as follows. Catalyzes the hydrolysis of N-succinyl-L,L-diaminopimelic acid (SDAP), forming succinate and LL-2,6-diaminopimelate (DAP), an intermediate involved in the bacterial biosynthesis of lysine and meso-diaminopimelic acid, an essential component of bacterial cell walls. The protein is Succinyl-diaminopimelate desuccinylase of Methylobacillus flagellatus (strain ATCC 51484 / DSM 6875 / VKM B-1610 / KT).